Here is a 272-residue protein sequence, read N- to C-terminus: Aquaporin-1 (272 aa).

Residues 1 to 11 (MASEFKKKLFW) are Cytoplasmic-facing. Residues 12–29 (RAVVAEFLAMILFIFISI) form a helical membrane-spanning segment. At 30–48 (GSALGFHYPIKSNQTTGAV) the chain is on the extracellular side. A glycan (N-linked (GlcNAc...) asparagine) is linked at Asn-42. The helical transmembrane segment at 49–67 (QDNVKVSLAFGLSIATLAQ) threads the bilayer. Over 68–70 (SVG) the chain is Cytoplasmic. An intramembrane segment occupies 71 to 84 (HISGAHLNPAVTLG). An NPA 1 motif is present at residues 78–80 (NPA). Residues 85–92 (LLLSCQIS) are Cytoplasmic-facing. A helical membrane pass occupies residues 93-111 (ILRAIMYIIAQCVGAIVAT). Over 112-135 (VILSGITSSLPDNSLGLNALAPGV) the chain is Extracellular. The helical transmembrane segment at 136-155 (NSGQGLGIEIIGTLQLVLCV) threads the bilayer. At 156-166 (LATTDRRRRRD) the chain is on the cytoplasmic side. The helical transmembrane segment at 167 to 184 (LGDSGPLAIGFSVALGHL) threads the bilayer. Topologically, residues 185–189 (LAIDY) are extracellular. Residues 190–202 (TGCGINPARSFGS) lie within the membrane without spanning it. Positions 195–197 (NPA) match the NPA 2 motif. At 203-209 (SVITHNF) the chain is on the extracellular side. Residues 210-227 (QDHWIFWVGPFIGAALAV) traverse the membrane as a helical segment. Topologically, residues 228-272 (LIYDFILAPRSSDLTDRVKVWTSGQVEEYDLDADDINSRVEMKPK) are cytoplasmic. Position 250 is a phosphoserine (Ser-250). Tyr-256 carries the post-translational modification Phosphotyrosine. The residue at position 265 (Ser-265) is a Phosphoserine.

This sequence belongs to the MIP/aquaporin (TC 1.A.8) family. In terms of assembly, homotetramer; each monomer provides an independent water pore. Component of the ankyrin-1 complex in the erythrocyte, composed of ANK1, RHCE, RHAG, SLC4A1, EPB42, GYPA, GYPB and AQP1. Interacts with EPHB2; involved in endolymph production in the inner ear. Identified in a complex with STOM. Interacts (via the N-terminal) with ANK1 (via ANK 1-5 repeats). Interacts (via the C-terminal) with EPB42. Detected in fetal kidney (at protein level). Detected in fetal kidney.

Its subcellular location is the cell membrane. The catalysed reaction is H2O(in) = H2O(out). It catalyses the reaction nitric oxide(out) = nitric oxide(in). It carries out the reaction CO2(out) = CO2(in). The enzyme catalyses glycerol(in) = glycerol(out). The catalysed reaction is H2O2(out) = H2O2(in). It catalyses the reaction K(+)(in) = K(+)(out). It carries out the reaction Na(+)(in) = Na(+)(out). In terms of biological role, forms a water channel that facilitates the transport of water across cell membranes, playing a crucial role in water homeostasis in various tissues. Could also be permeable to small solutes including hydrogen peroxide, glycerol and gases such as amonnia (NH3), nitric oxide (NO) and carbon dioxide (CO2). Recruited to the ankyrin-1 complex, a multiprotein complex of the erythrocyte membrane, it could be part of a CO2 metabolon, linking facilitated diffusion of CO2 across the membrane, anion exchange of Cl(-)/HCO3(-) and interconversion of dissolved CO2 and carbonic acid in the cytosol. In vitro, it shows non-selective gated cation channel activity and may be permeable to cations like K(+) and Na(+) in vivo. This is Aquaporin-1 from Ovis aries (Sheep).